The chain runs to 620 residues: Carotenoid isomerooxygenase (620 aa).

Positions 211, 267, and 337 each coordinate Fe cation. The tract at residues 440–459 (NGKQATAGEESPKRDAKRGR) is disordered. The segment covering 449–459 (ESPKRDAKRGR) has biased composition (basic and acidic residues). A Fe cation-binding site is contributed by H612.

Belongs to the carotenoid oxygenase family. Fe(2+) serves as cofactor. In terms of tissue distribution, expression follows organogenesis of the larval Bolwig's organ (BO), which mediates larval photophobic behavior. In the adult, expression is restricted exclusively to the brain. Expressed in both neuronal cells and glia cells. Not active within photoreceptors. Active within neuronal cells within the central nervous system.

The enzyme catalyses all-trans-zeaxanthin + O2 = (3R)-11-cis-3-hydroxyretinal + (3R)-all-trans-3-hydroxyretinal. It functions in the pathway cofactor metabolism; retinol metabolism. Catalyzes the oxidative cleavage at the 15,15'-double bond of carotenoids and the simultaneous all-trans to 11-cis isomerization of one cleavage product. Carotenoids like 11-cis retinal can promote visual pigment biogenesis in the dark. Essential for the biosynthesis of the 3-hydroxyretinal chromophore of rhodopsin from zeaxanthin and for proper photoreceptor development. Also essential for larval light perception. This is Carotenoid isomerooxygenase (ninaB) from Drosophila melanogaster (Fruit fly).